We begin with the raw amino-acid sequence, 377 residues long: PqqA peptide cyclase (377 aa).

In terms of domain architecture, Radical SAM core spans F12 to Q228. 3 residues coordinate [4Fe-4S] cluster: C26, C30, and C33.

It belongs to the radical SAM superfamily. PqqE family. Interacts with PqqD. The interaction is necessary for activity of PqqE. [4Fe-4S] cluster serves as cofactor.

It carries out the reaction [PQQ precursor protein] + S-adenosyl-L-methionine = E-Y cross-linked-[PQQ precursor protein] + 5'-deoxyadenosine + L-methionine + H(+). Its pathway is cofactor biosynthesis; pyrroloquinoline quinone biosynthesis. In terms of biological role, catalyzes the cross-linking of a glutamate residue and a tyrosine residue in the PqqA protein as part of the biosynthesis of pyrroloquinoline quinone (PQQ). This Rhodopseudomonas palustris (strain ATCC BAA-98 / CGA009) protein is PqqA peptide cyclase.